The chain runs to 367 residues: Protein RecA (367 aa).

73-80 (GPESSGKT) is a binding site for ATP.

Belongs to the RecA family.

The protein resides in the cytoplasm. In terms of biological role, can catalyze the hydrolysis of ATP in the presence of single-stranded DNA, the ATP-dependent uptake of single-stranded DNA by duplex DNA, and the ATP-dependent hybridization of homologous single-stranded DNAs. It interacts with LexA causing its activation and leading to its autocatalytic cleavage. The protein is Protein RecA of Delftia acidovorans (strain DSM 14801 / SPH-1).